Reading from the N-terminus, the 805-residue chain is DNA gyrase subunit B (805 aa).

Residues 435–550 form the Toprim domain; the sequence is SEIFIVEGDS…RGYIYIAQPP (116 aa). Mg(2+) contacts are provided by Glu-441, Asp-515, and Asp-517.

It belongs to the type II topoisomerase GyrB family. As to quaternary structure, heterotetramer, composed of two GyrA and two GyrB chains. In the heterotetramer, GyrA contains the active site tyrosine that forms a transient covalent intermediate with DNA, while GyrB binds cofactors and catalyzes ATP hydrolysis. It depends on Mg(2+) as a cofactor. Requires Mn(2+) as cofactor. Ca(2+) is required as a cofactor.

Its subcellular location is the cytoplasm. The enzyme catalyses ATP-dependent breakage, passage and rejoining of double-stranded DNA.. A type II topoisomerase that negatively supercoils closed circular double-stranded (ds) DNA in an ATP-dependent manner to modulate DNA topology and maintain chromosomes in an underwound state. Negative supercoiling favors strand separation, and DNA replication, transcription, recombination and repair, all of which involve strand separation. Also able to catalyze the interconversion of other topological isomers of dsDNA rings, including catenanes and knotted rings. Type II topoisomerases break and join 2 DNA strands simultaneously in an ATP-dependent manner. The polypeptide is DNA gyrase subunit B (Caulobacter vibrioides (strain ATCC 19089 / CIP 103742 / CB 15) (Caulobacter crescentus)).